Consider the following 556-residue polypeptide: Innexin-7 (556 aa).

Transmembrane regions (helical) follow at residues Leu-21–Ile-41, Phe-127–Ala-147, and Ala-213–Leu-233. Asn-267 carries an N-linked (GlcNAc...) asparagine glycan. Residues Ile-310–Phe-330 form a helical membrane-spanning segment. Residues Asp-431–Trp-556 are disordered. The span at Val-435–His-447 shows a compositional bias: polar residues. Basic and acidic residues predominate over residues Arg-452–Val-461. The span at Ser-463–Pro-474 shows a compositional bias: polar residues. The span at Lys-500 to Ser-513 shows a compositional bias: basic residues. Low complexity predominate over residues Ser-514–Pro-527. Positions His-539–Trp-556 are enriched in basic and acidic residues.

This sequence belongs to the pannexin family.

The protein resides in the cell membrane. The protein localises to the cell junction. It localises to the gap junction. Functionally, structural component of the gap junctions. The protein is Innexin-7 (inx-7) of Caenorhabditis elegans.